The sequence spans 619 residues: MAREHAIGEATGKRKKRGRVEEAEEYCNDGIEEQVEDEKLPLEVGMFYYPMTPPSFIVSDALEPDFPLIYVNRVFEVFTGYRADEVLGRNCRFLQYRDPRAQRRHPLVDPVVVSEIRRCLEEGIEFQGELLNFRKDGTPLVNRLRLAPIRDDDGTITHVIGIQVFSETTIDLDRVSYPVFKHKQQLDQTSECLFPSGSPRFKEHHEDFCGILQLSDEVLAHNILSRLTPRDVASIGSACRRLRQLTKNESVRKMVCQNAWGKEITGTLEIMTKKLRWGRLARELTTLEAVCWRKFTVGGIVQPSRCNFSACAVGNRLVLFGGEGVNMQPLDDTFVLNLDAECPEWQRVRVTSSPPGRWGHTLSCLNGSWLVVFGGCGRQGLLNDVFVLDLDAKHPTWKEVAGGTPPLPRSWHSSCTIEGSKLVVSGGCTDAGVLLSDTFLLDLTTDKPTWKEIPTSWAPPSRLGHSLSVFGRTKILMFGGLANSGHLKLRSGEAYTIDLEDEEPRWRELECSAFPGVVVPPPRLDHVAVSMPCGRVIIFGGSIAGLHSPSQLFLIDPAEEKPSWRILNVPGKPPKLAWGHSTCVVGGTRVLVLGGHTGEEWILNELHELCLASRQDSDL.

One can recognise a PAS domain in the interval 44–123 (VGMFYYPMTP…SEIRRCLEEG (80 aa)). Residue cysteine 91 is modified to S-4a-FMN cysteine. A PAC domain is found at 127-168 (QGELLNFRKDGTPLVNRLRLAPIRDDDGTITHVIGIQVFSET). Positions 211–257 (ILQLSDEVLAHNILSRLTPRDVASIGSACRRLRQLTKNESVRKMVCQ) constitute an F-box domain. Kelch repeat units follow at residues 304–354 (SRCN…TSSP), 357–404 (RWGH…AGGT), 409–457 (RSWH…PTSW), 462–513 (RLGH…ECSA), and 523–571 (RLDH…NVPG).

This sequence belongs to the ADAGIO family. As to quaternary structure, interacts with ADO1 (via Kelch repeats), ADO2 (via Kelch repeats), SKP1A/ASK1, SKP1B/ASK2, ASK3, SKP1K/ASK11, ASK12, ASK13 and SKP1N/ASK14. Interacts (via Kelch repeats) with CDF1, CDF2 and CDF3. Interacts (via N-terminus) with CO and GI (via N-terminus) in a blue-light-dependent manner. In terms of processing, FMN binds covalently to cysteine after exposure to blue light and is reversed in the dark. In terms of tissue distribution, highly expressed in stomata and leaves and to a lower extent in seeds, roots, rosettes, stems and siliques. Also present in sepals and anther filaments.

The protein localises to the nucleus. It is found in the cytoplasm. It functions in the pathway protein modification; protein ubiquitination. Component of an E3 ubiquitin ligase complex that plays a central role in blue light-dependent circadian cycles. Acts as a blue light photoreceptor, due to the presence of FMN, that mediates light-regulated protein degradation of critical clock components by targeting them to the proteasome complex. The SCF(ADO3) E3 ubiquitin ligase complex is involved in the regulation of circadian clock-dependent processes including transition to flowering time, hypocotyl elongation, cotyledons and leaf movement rhythms. Forms a complex with 'GIGANTEA' (GI) to regulate 'CONSTANS' (CO) expression. Promotes CO expression during the light period of long days by decreasing the stability of CDF1 and CDF2 and by interacting directly with the CO protein and stabilizing it. ADO3 function is mainly GI dependent. Does not act as a regulator of CDF1 transcription. The interactions of ADO1/ZTL and ADO2 with ADO3 prevent its interaction with CDF1. The protein is Adagio protein 3 (ADO3) of Arabidopsis thaliana (Mouse-ear cress).